The sequence spans 170 residues: NAD(P)H-quinone oxidoreductase subunit I, chloroplastic (170 aa).

4Fe-4S ferredoxin-type domains follow at residues 55-84 (GRIH…VDWK) and 95-124 (LNYS…MTEE). The [4Fe-4S] cluster site is built by C64, C67, C70, C74, C104, C107, C110, and C114.

This sequence belongs to the complex I 23 kDa subunit family. NDH is composed of at least 16 different subunits, 5 of which are encoded in the nucleus. The cofactor is [4Fe-4S] cluster.

It is found in the plastid. The protein localises to the chloroplast thylakoid membrane. The enzyme catalyses a plastoquinone + NADH + (n+1) H(+)(in) = a plastoquinol + NAD(+) + n H(+)(out). It carries out the reaction a plastoquinone + NADPH + (n+1) H(+)(in) = a plastoquinol + NADP(+) + n H(+)(out). Its function is as follows. NDH shuttles electrons from NAD(P)H:plastoquinone, via FMN and iron-sulfur (Fe-S) centers, to quinones in the photosynthetic chain and possibly in a chloroplast respiratory chain. The immediate electron acceptor for the enzyme in this species is believed to be plastoquinone. Couples the redox reaction to proton translocation, and thus conserves the redox energy in a proton gradient. The polypeptide is NAD(P)H-quinone oxidoreductase subunit I, chloroplastic (Spinacia oleracea (Spinach)).